Reading from the N-terminus, the 457-residue chain is Chromosomal replication initiator protein DnaA (457 aa).

Residues 1 to 75 (MDAQLNNLWE…ALKIVTSRKF (75 aa)) are domain I, interacts with DnaA modulators. The domain II stretch occupies residues 75 to 118 (FKIEFYLESDLEEEKENEEKQKEEKKENTNDVDGSIVVSDEMSA). Positions 119 to 335 (TLNPKYTFQS…GALIRIIAYS (217 aa)) are domain III, AAA+ region. Residues G163, G165, K166, and T167 each coordinate ATP. The tract at residues 336–457 (SLTNRDVSVD…NDITKKLTQK (122 aa)) is domain IV, binds dsDNA.

This sequence belongs to the DnaA family. As to quaternary structure, oligomerizes as a right-handed, spiral filament on DNA at oriC.

The protein localises to the cytoplasm. Functionally, plays an essential role in the initiation and regulation of chromosomal replication. ATP-DnaA binds to the origin of replication (oriC) to initiate formation of the DNA replication initiation complex once per cell cycle. Binds the DnaA box (a 9 base pair repeat at the origin) and separates the double-stranded (ds)DNA. Forms a right-handed helical filament on oriC DNA; dsDNA binds to the exterior of the filament while single-stranded (ss)DNA is stabiized in the filament's interior. The ATP-DnaA-oriC complex binds and stabilizes one strand of the AT-rich DNA unwinding element (DUE), permitting loading of DNA polymerase. After initiation quickly degrades to an ADP-DnaA complex that is not apt for DNA replication. Binds acidic phospholipids. This is Chromosomal replication initiator protein DnaA from Clostridium perfringens (strain ATCC 13124 / DSM 756 / JCM 1290 / NCIMB 6125 / NCTC 8237 / Type A).